We begin with the raw amino-acid sequence, 359 residues long: Pyruvate dehydrogenase E1 component subunit beta, mitochondrial (359 aa).

The transit peptide at 1–30 (MAAVAGLVRGPLRQASGLLKRRFHRSAPAA) directs the protein to the mitochondrion. Y67 is modified (phosphotyrosine). Position 89 (E89) interacts with thiamine diphosphate. Residues I142, A190, I191, D193, and N195 each contribute to the K(+) site. K354 carries the N6-acetyllysine modification.

As to quaternary structure, heterotetramer of two PDHA1 and two PDHB subunits. The heterotetramer interacts with DLAT, and is part of the multimeric pyruvate dehydrogenase complex that contains multiple copies of pyruvate dehydrogenase (E1), dihydrolipoamide acetyltransferase (DLAT, E2) and lipoamide dehydrogenase (DLD, E3). These subunits are bound to an inner core composed of about 48 DLAT and 12 PDHX molecules. Interacts with DLAT. Requires thiamine diphosphate as cofactor.

Its subcellular location is the mitochondrion matrix. The enzyme catalyses N(6)-[(R)-lipoyl]-L-lysyl-[protein] + pyruvate + H(+) = N(6)-[(R)-S(8)-acetyldihydrolipoyl]-L-lysyl-[protein] + CO2. Its function is as follows. The pyruvate dehydrogenase complex catalyzes the overall conversion of pyruvate to acetyl-CoA and CO(2), and thereby links the glycolytic pathway to the tricarboxylic cycle. The chain is Pyruvate dehydrogenase E1 component subunit beta, mitochondrial (Pdhb) from Rattus norvegicus (Rat).